The chain runs to 32 residues: Turripeptide XIV-18 (32 aa).

Ile30 bears the Isoleucine amide mark.

Post-translationally, contains 2 disulfide bonds. As to expression, expressed by the venom duct.

It localises to the secreted. The polypeptide is Turripeptide XIV-18 (Gemmula speciosa (Splendid gem-turris)).